A 537-amino-acid chain; its full sequence is Tyrosine-protein kinase Fyn (537 aa).

The N-myristoyl glycine moiety is linked to residue glycine 2. Residues cysteine 3 and cysteine 6 are each lipidated (S-palmitoyl cysteine). Threonine 12 carries the phosphothreonine; by PKC modification. The tract at residues 14–35 (LTEERDGSLNQSSGYRYGTDPT) is disordered. 2 positions are modified to phosphoserine: serine 21 and serine 26. The SH3 domain maps to 82–143 (TGVTLFVALY…PSNYVAPVDS (62 aa)). The 98-residue stretch at 149-246 (WYFGKLGRKD…GLCCRLVVPC (98 aa)) folds into the SH2 domain. Tyrosine 185 carries the post-translational modification Phosphotyrosine. The 254-residue stretch at 271–524 (LQLIKRLGNG…YLQGFLEDYF (254 aa)) folds into the Protein kinase domain. Residues 277–285 (LGNGQFGEV) and lysine 299 each bind ATP. The active-site Proton acceptor is the aspartate 390. At tyrosine 420 the chain carries Phosphotyrosine; by autocatalysis. Tyrosine 531 is subject to Phosphotyrosine; by CSK.

The protein belongs to the protein kinase superfamily. Tyr protein kinase family. SRC subfamily. As to quaternary structure, interacts (via its SH3 domain) with PIK3R1 and PRMT8. Interacts with FYB1, PAG1, and SH2D1A. Interacts with CD79A (tyrosine-phosphorylated form); the interaction increases FYN activity. Interacts (via SH2 domain) with CSF1R (tyrosine phosphorylated). Interacts with TOM1L1 (phosphorylated form). Interacts with KDR (tyrosine phosphorylated). Interacts (via SH3 domain) with KLHL2 (via N-terminus). Interacts with SH2D1A and SLAMF1. Interacts with ITCH; the interaction phosphorylates ITCH and negatively regulates its activity. Interacts with FASLG. Interacts with RUNX3. Interacts with KIT. Interacts with EPHA8; possible downstream effector of EPHA8 in regulation of cell adhesion. Interacts with PTK2/FAK1; this interaction leads to PTK2/FAK1 phosphorylation and activation. Interacts with CAV1; this interaction couples integrins to the Ras-ERK pathway. Interacts with UNC119. Interacts (via SH2 domain) with PTPRH (phosphorylated form). Interacts with PTPRO (phosphorylated form). Interacts with PTPRB (phosphorylated form). Interacts with FYB2. Interacts with DSCAM. Interacts with SKAP1 and FYB1; this interaction promotes the phosphorylation of CLNK. Interacts with NEDD9; in the presence of PTK2. Requires Mn(2+) as cofactor. In terms of processing, autophosphorylated at Tyr-420. Phosphorylation on the C-terminal tail at Tyr-531 by CSK maintains the enzyme in an inactive state. PTPRC/CD45 dephosphorylates Tyr-531 leading to activation. Ultraviolet B (UVB) strongly increase phosphorylation at Thr-12 and kinase activity, and promotes translocation from the cytoplasm to the nucleus. Dephosphorylation at Tyr-420 by PTPN2 negatively regulates T-cell receptor signaling. Phosphorylated at tyrosine residues, which can be enhanced by NTN1. Palmitoylated. Palmitoylation at Cys-3 and Cys-6, probably by ZDHHC21, regulates subcellular location.

It is found in the cytoplasm. Its subcellular location is the nucleus. The protein localises to the cell membrane. It localises to the perikaryon. The enzyme catalyses L-tyrosyl-[protein] + ATP = O-phospho-L-tyrosyl-[protein] + ADP + H(+). Its activity is regulated as follows. Inhibited by phosphorylation of Tyr-531 by leukocyte common antigen and activated by dephosphorylation of this site. Functionally, non-receptor tyrosine-protein kinase that plays a role in many biological processes including regulation of cell growth and survival, cell adhesion, integrin-mediated signaling, cytoskeletal remodeling, cell motility, immune response and axon guidance. Inactive FYN is phosphorylated on its C-terminal tail within the catalytic domain. Following activation by PKA, the protein subsequently associates with PTK2/FAK1, allowing PTK2/FAK1 phosphorylation, activation and targeting to focal adhesions. Involved in the regulation of cell adhesion and motility through phosphorylation of CTNNB1 (beta-catenin) and CTNND1 (delta-catenin). Regulates cytoskeletal remodeling by phosphorylating several proteins including the actin regulator WAS and the microtubule-associated proteins MAP2 and MAPT. Promotes cell survival by phosphorylating AGAP2/PIKE-A and preventing its apoptotic cleavage. Participates in signal transduction pathways that regulate the integrity of the glomerular slit diaphragm (an essential part of the glomerular filter of the kidney) by phosphorylating several slit diaphragm components including NPHS1, KIRREL1 and TRPC6. Plays a role in neural processes by phosphorylating DPYSL2, a multifunctional adapter protein within the central nervous system, ARHGAP32, a regulator for Rho family GTPases implicated in various neural functions, and SNCA, a small pre-synaptic protein. Involved in reelin signaling by mediating phosphorylation of DAB1 following reelin (RELN)-binding to its receptor. Participates in the downstream signaling pathways that lead to T-cell differentiation and proliferation following T-cell receptor (TCR) stimulation. Phosphorylates PTK2B/PYK2 in response to T-cell receptor activation. Also participates in negative feedback regulation of TCR signaling through phosphorylation of PAG1, thereby promoting interaction between PAG1 and CSK and recruitment of CSK to lipid rafts. CSK maintains LCK and FYN in an inactive form. Promotes CD28-induced phosphorylation of VAV1. In mast cells, phosphorylates CLNK after activation of immunoglobulin epsilon receptor signaling. Can also promote CD244-mediated NK cell activation. The protein is Tyrosine-protein kinase Fyn of Bos taurus (Bovine).